Reading from the N-terminus, the 489-residue chain is Glutamate--tRNA ligase (489 aa).

A 'HIGH' region motif is present at residues 12–22 (PSPTGIPHVGM). The 'KMSKS' region motif lies at 256 to 260 (KLSKR). Residue K259 coordinates ATP.

It belongs to the class-I aminoacyl-tRNA synthetase family. Glutamate--tRNA ligase type 1 subfamily. As to quaternary structure, monomer.

The protein resides in the cytoplasm. It carries out the reaction tRNA(Glu) + L-glutamate + ATP = L-glutamyl-tRNA(Glu) + AMP + diphosphate. Catalyzes the attachment of glutamate to tRNA(Glu) in a two-step reaction: glutamate is first activated by ATP to form Glu-AMP and then transferred to the acceptor end of tRNA(Glu). This chain is Glutamate--tRNA ligase, found in Mycobacterium marinum (strain ATCC BAA-535 / M).